The primary structure comprises 341 residues: MLVLGLETSCDETGVALYDSERGLLADALFSQIDLHRVFGGVVPELASRDHVKRMLPLIRQVLDEAGCVATEIDAIAYTAGPGLVGALLVGASCAQALAFAWDIPAIGVHHMEGHLLAPMLEENPPEFPFVALLVSGGHTQLVRVDGIGQYELLGESLDDAAGEAFDKTAKLIGLNYPGGPEIARLAEQGVPGRFVFPRPMTDRPGLEFSFSGLKTFALNTWQQCKNAGDDSEQTRCDLSLAFQQAVVETLTIKCKRALKQTGLKRLVIAGGVSANKALRASLEDMLGSIKGNVYYARPQFCTDNGAMIAYAGCQRLLAGQQQDLAISVQARWPMEQLPPL.

Fe cation is bound by residues His111 and His115. Substrate-binding positions include Leu134–Gly138, Asp167, Gly180, and Asn276. A Fe cation-binding site is contributed by Asp304.

It belongs to the KAE1 / TsaD family. Fe(2+) serves as cofactor.

The protein localises to the cytoplasm. It carries out the reaction L-threonylcarbamoyladenylate + adenosine(37) in tRNA = N(6)-L-threonylcarbamoyladenosine(37) in tRNA + AMP + H(+). In terms of biological role, required for the formation of a threonylcarbamoyl group on adenosine at position 37 (t(6)A37) in tRNAs that read codons beginning with adenine. Is involved in the transfer of the threonylcarbamoyl moiety of threonylcarbamoyl-AMP (TC-AMP) to the N6 group of A37, together with TsaE and TsaB. TsaD likely plays a direct catalytic role in this reaction. The sequence is that of tRNA N6-adenosine threonylcarbamoyltransferase from Pseudomonas putida (strain ATCC 47054 / DSM 6125 / CFBP 8728 / NCIMB 11950 / KT2440).